The primary structure comprises 248 residues: Adenosylcobinamide-GDP ribazoletransferase (248 aa).

Transmembrane regions (helical) follow at residues 24–44 (EINL…IGAW), 70–90 (IIIT…GLFS), 106–126 (VGAN…SLFL), 134–154 (IGWL…LLFA), 157–177 (TYAG…WWPV), 188–210 (LGLF…TIIY), and 228–248 (AGGQ…WGLI).

Belongs to the CobS family. Requires Mg(2+) as cofactor.

Its subcellular location is the cell membrane. It carries out the reaction alpha-ribazole + adenosylcob(III)inamide-GDP = adenosylcob(III)alamin + GMP + H(+). The catalysed reaction is alpha-ribazole 5'-phosphate + adenosylcob(III)inamide-GDP = adenosylcob(III)alamin 5'-phosphate + GMP + H(+). It functions in the pathway cofactor biosynthesis; adenosylcobalamin biosynthesis; adenosylcobalamin from cob(II)yrinate a,c-diamide: step 7/7. In terms of biological role, joins adenosylcobinamide-GDP and alpha-ribazole to generate adenosylcobalamin (Ado-cobalamin). Also synthesizes adenosylcobalamin 5'-phosphate from adenosylcobinamide-GDP and alpha-ribazole 5'-phosphate. In Listeria monocytogenes serotype 4b (strain CLIP80459), this protein is Adenosylcobinamide-GDP ribazoletransferase.